Here is a 1052-residue protein sequence, read N- to C-terminus: Membrane-bound transcription factor site-1 protease (1052 aa).

The signal sequence occupies residues 1 to 17; the sequence is MKLVNIWLLLLVVLLCG. The propeptide occupies 18–186; sequence KKHLGDRLGK…TGRHSSRRLL (169 aa). A glycan (N-linked (GlcNAc...) asparagine) is linked at N148. S168 is modified (phosphoserine). At 187–999 the chain is on the lumenal side; the sequence is RAIPRQVAQT…MPGRYNQEVG (813 aa). The Peptidase S8 domain maps to 190–472; the sequence is PRQVAQTLQA…HGKLDLLRAY (283 aa). D218 (charge relay system) is an active-site residue. Residue N236 is glycosylated (N-linked (GlcNAc...) asparagine). H249 functions as the Charge relay system in the catalytic mechanism. A glycan (N-linked (GlcNAc...) asparagine) is linked at N305. The active-site Charge relay system is S414. Residues N515 and N728 are each glycosylated (N-linked (GlcNAc...) asparagine). Over residues 877–887 the composition is skewed to polar residues; that stretch reads PSLSHSGNRQR. Residues 877–900 form a disordered region; that stretch reads PSLSHSGNRQRPPSGAGLAPPERM. Residue N939 is glycosylated (N-linked (GlcNAc...) asparagine). A helical membrane pass occupies residues 1000 to 1022; the sequence is QTIPVFAFLGAMVALAFFVVQIS. The Cytoplasmic portion of the chain corresponds to 1023-1052; the sequence is KAKSRPKRRRPRAKRPQLAQQAHPARTPSV. A compositionally biased stretch (basic residues) spans 1026–1037; sequence SRPKRRRPRAKR. The tract at residues 1026–1052 is disordered; the sequence is SRPKRRRPRAKRPQLAQQAHPARTPSV.

Belongs to the peptidase S8 family. As to quaternary structure, interacts with LYSET; this interaction bridges GNPTAB to MBTPS1. It depends on Ca(2+) as a cofactor. In terms of processing, the 148 kDa zymogen is processed progressively into two membrane-bound 120 and 106 kDa forms in the endoplasmic reticulum, and late into a secreted 98 kDa form. The propeptide is autocatalytically removed through an intramolecular cleavage after Leu-186. Further cleavage generates 14, 10, and 8 kDa intermediates. In terms of tissue distribution, widely expressed. In adult rat, highly expressed in anterior pituitary, thyroid and adrenal glands and in liver. In 2-day old rat, detected in developing skin, striated muscles, cardiac muscles, bones, teeth and internal organs. Highly expressed in retina, cerebellum, pituitary, submaxillary, thyroid and adrenal glands, molars, thymus, kidney and intestine.

Its subcellular location is the endoplasmic reticulum membrane. The protein resides in the golgi apparatus membrane. It carries out the reaction Processes precursors containing basic and hydrophobic/aliphatic residues at P4 and P2, respectively, with a relatively relaxed acceptance of amino acids at P1 and P3.. Its activity is regulated as follows. Inhibited by divalent copper and zinc ions, but not by nickel or cobalt. Inhibited by its prosegment, but not smaller fragments. Inhibited by 4-(2-aminoethyl)benzenesulfonyl fluoride (AEBSF), a serine protease inhibitor. Its function is as follows. Serine protease that cleaves after hydrophobic or small residues, provided that Arg or Lys is in position P4: known substrates include SREBF1/SREBP1, SREBF2/SREBP2, BDNF, GNPTAB, ATF6, ATF6B and FAM20C. Cleaves substrates after Arg-Ser-Val-Leu (SREBP2), Arg-His-Leu-Leu (ATF6), Arg-Gly-Leu-Thr (BDNF) and its own propeptide after Arg-Arg-Leu-Leu. Catalyzes the first step in the proteolytic activation of the sterol regulatory element-binding proteins (SREBPs) SREBF1/SREBP1 and SREBF2/SREBP2. Also mediates the first step in the proteolytic activation of the cyclic AMP-dependent transcription factor ATF-6 (ATF6 and ATF6B). Mediates the protein cleavage of GNPTAB into subunit alpha and beta, thereby participating in biogenesis of lysosomes. Cleaves the propeptide from FAM20C which is required for FAM20C secretion from the Golgi apparatus membrane and for enhancement of FAM20C kinase activity, promoting osteoblast differentiation and biomineralization. Involved in the regulation of M6P-dependent Golgi-to-lysosome trafficking of lysosomal enzymes. It is required for the activation of CREB3L2/BBF2H7, a transcriptional activator of MIA3/TANGO and other genes controlling mega vesicle formation. Therefore, it plays a key role in the regulation of mega vesicle-mediated collagen trafficking. In astrocytes and osteoblasts, upon DNA damage and ER stress, mediates the first step of the regulated intramembrane proteolytic activation of the transcription factor CREB3L1, leading to the inhibition of cell-cycle progression. This chain is Membrane-bound transcription factor site-1 protease (Mbtps1), found in Rattus norvegicus (Rat).